The chain runs to 68 residues: Large ribosomal subunit protein bL31 (68 aa).

Positions 16, 18, 36, and 39 each coordinate Zn(2+).

It belongs to the bacterial ribosomal protein bL31 family. Type A subfamily. As to quaternary structure, part of the 50S ribosomal subunit. The cofactor is Zn(2+).

Functionally, binds the 23S rRNA. This is Large ribosomal subunit protein bL31 from Dictyoglomus thermophilum (strain ATCC 35947 / DSM 3960 / H-6-12).